A 224-amino-acid polypeptide reads, in one-letter code: UPF0758 protein Lm4b_01560 (224 aa).

Residues 102 to 224 (VVRCPEDAVK…YISLKEKGYF (123 aa)) enclose the MPN domain. 3 residues coordinate Zn(2+): His-173, His-175, and Asp-186. The JAMM motif signature appears at 173–186 (HNHPSGDPTPSSED).

This sequence belongs to the UPF0758 family.

The protein is UPF0758 protein Lm4b_01560 of Listeria monocytogenes serotype 4b (strain CLIP80459).